The primary structure comprises 64 residues: Large ribosomal subunit protein bL35 (64 aa).

This sequence belongs to the bacterial ribosomal protein bL35 family.

The chain is Large ribosomal subunit protein bL35 from Micrococcus luteus (strain ATCC 4698 / DSM 20030 / JCM 1464 / CCM 169 / CCUG 5858 / IAM 1056 / NBRC 3333 / NCIMB 9278 / NCTC 2665 / VKM Ac-2230) (Micrococcus lysodeikticus).